A 346-amino-acid polypeptide reads, in one-letter code: N-acetyl-gamma-glutamyl-phosphate reductase (346 aa).

C149 is an active-site residue.

It belongs to the NAGSA dehydrogenase family. Type 1 subfamily.

The protein localises to the cytoplasm. It carries out the reaction N-acetyl-L-glutamate 5-semialdehyde + phosphate + NADP(+) = N-acetyl-L-glutamyl 5-phosphate + NADPH + H(+). It participates in amino-acid biosynthesis; L-arginine biosynthesis; N(2)-acetyl-L-ornithine from L-glutamate: step 3/4. Its function is as follows. Catalyzes the NADPH-dependent reduction of N-acetyl-5-glutamyl phosphate to yield N-acetyl-L-glutamate 5-semialdehyde. In Geobacter sp. (strain M21), this protein is N-acetyl-gamma-glutamyl-phosphate reductase.